We begin with the raw amino-acid sequence, 139 residues long: Invertebrate-type lysozyme 3 (139 aa).

An N-terminal signal peptide occupies residues 1 to 18 (MFVKSLVFLTIAVAYASA). In terms of domain architecture, I-type lysozyme spans 19–138 (DCLHCICMRE…WNGIKSCCGC (120 aa)). Disulfide bonds link Cys20/Cys106, Cys23/Cys138, Cys25/Cys31, Cys36/Cys45, Cys58/Cys86, Cys76/Cys82, and Cys98/Cys120. The active-site Proton donor is the Glu28. Asp39 acts as the Nucleophile in catalysis. 51–57 (KLPYYED) is a binding site for substrate. Substrate contacts are provided by residues Tyr90 and 113–115 (HNG).

The protein belongs to the glycosyl hydrolase 22 family. Type-I lysozyme subfamily. Expressed in pharynx grinder muscle pm7, isthmus marginal cell mc2 and pharyngeal muscle cell pm5, intestinal cells and at lower levels in coelomocytes and epidermis. Expressed at low levels in intestine.

The protein resides in the late endosome lumen. The protein localises to the recycling endosome lumen. Its subcellular location is the lysosome lumen. It is found in the secreted. It carries out the reaction Hydrolysis of (1-&gt;4)-beta-linkages between N-acetylmuramic acid and N-acetyl-D-glucosamine residues in a peptidoglycan and between N-acetyl-D-glucosamine residues in chitodextrins.. In terms of biological role, has bacteriolytic activity against Gram-positive bacteria. Plays a role in defense against bacterial pathogens. Involved in pharyngeal grinder function by enabling proper lysis of ingested bacteria. The polypeptide is Invertebrate-type lysozyme 3 (Caenorhabditis elegans).